Consider the following 443-residue polypeptide: Glutamyl-tRNA reductase (443 aa).

Residues 49–52, Ser109, 114–116, and Gln120 each bind substrate; these read TCNR and ETQ. Cys50 acts as the Nucleophile in catalysis. 189–194 is a binding site for NADP(+); sequence GAGEMS.

The protein belongs to the glutamyl-tRNA reductase family. Homodimer.

It catalyses the reaction (S)-4-amino-5-oxopentanoate + tRNA(Glu) + NADP(+) = L-glutamyl-tRNA(Glu) + NADPH + H(+). It functions in the pathway porphyrin-containing compound metabolism; protoporphyrin-IX biosynthesis; 5-aminolevulinate from L-glutamyl-tRNA(Glu): step 1/2. Functionally, catalyzes the NADPH-dependent reduction of glutamyl-tRNA(Glu) to glutamate 1-semialdehyde (GSA). The polypeptide is Glutamyl-tRNA reductase (Desulfitobacterium hafniense (strain DSM 10664 / DCB-2)).